An 82-amino-acid polypeptide reads, in one-letter code: Small ribosomal subunit protein uS17 (82 aa).

This sequence belongs to the universal ribosomal protein uS17 family. Part of the 30S ribosomal subunit.

One of the primary rRNA binding proteins, it binds specifically to the 5'-end of 16S ribosomal RNA. In Nitrobacter hamburgensis (strain DSM 10229 / NCIMB 13809 / X14), this protein is Small ribosomal subunit protein uS17.